The primary structure comprises 424 residues: Putative polyketide beta-ketoacyl synthase 2 (424 aa).

Positions 13–416 (SRRAVVTGLG…GSNSALVLRR (404 aa)) constitute a Ketosynthase family 3 (KS3) domain.

The protein belongs to the thiolase-like superfamily. Beta-ketoacyl-ACP synthases family.

In terms of biological role, involved in developmentally regulated synthesis of a compound biosynthetically related to polyketide antibiotics which is essential for spore color in Streptomyces coelicolor. This is Putative polyketide beta-ketoacyl synthase 2 from Streptomyces coelicolor (strain ATCC BAA-471 / A3(2) / M145).